A 101-amino-acid chain; its full sequence is Protein SPIRAL1-like 3 (101 aa).

Residues 1–22 are compositionally biased toward gly residues; it reads MGRGVSSGGGQSSLGYLFGGGE. Disordered stretches follow at residues 1–54 and 73–101; these read MGRG…GIQS and TDRPSTKVQAAPGGGSSLDYLFSGNKDGK.

This sequence belongs to the SPIRAL1 family.

Functionally, acts in maintaining the cortical microtubules organization essential for anisotropic cell growth. The sequence is that of Protein SPIRAL1-like 3 from Oryza sativa subsp. japonica (Rice).